We begin with the raw amino-acid sequence, 262 residues long: Acyl-[acyl-carrier-protein]--UDP-N-acetylglucosamine O-acyltransferase (262 aa).

It belongs to the transferase hexapeptide repeat family. LpxA subfamily. As to quaternary structure, homotrimer.

It localises to the cytoplasm. The catalysed reaction is a (3R)-hydroxyacyl-[ACP] + UDP-N-acetyl-alpha-D-glucosamine = a UDP-3-O-[(3R)-3-hydroxyacyl]-N-acetyl-alpha-D-glucosamine + holo-[ACP]. The protein operates within glycolipid biosynthesis; lipid IV(A) biosynthesis; lipid IV(A) from (3R)-3-hydroxytetradecanoyl-[acyl-carrier-protein] and UDP-N-acetyl-alpha-D-glucosamine: step 1/6. Its function is as follows. Involved in the biosynthesis of lipid A, a phosphorylated glycolipid that anchors the lipopolysaccharide to the outer membrane of the cell. This chain is Acyl-[acyl-carrier-protein]--UDP-N-acetylglucosamine O-acyltransferase, found in Yersinia enterocolitica.